Reading from the N-terminus, the 451-residue chain is Portal protein (451 aa).

It belongs to the SPP1-like portal protein family. As to quaternary structure, homododecamer.

The protein localises to the virion. In terms of biological role, forms the portal vertex of the capsid. This portal plays critical roles in head assembly, genome packaging, neck/tail attachment, and genome ejection. The portal protein multimerizes as a single ring-shaped homododecamer arranged around a central channel. Binds to the terminase subunits to form the packaging machine. The sequence is that of Portal protein from Clostridium phage phiCD119 (strain Clostridium difficile/United States/Govind/2006) (Bacteriophage phiCD119).